A 174-amino-acid chain; its full sequence is MIEAQVGKRYAEAIYGIAEANNKVKELYDSLNIVMELYKGDKEFKNLVDHPLVKKEEKKEFINKVFSEFEKFSLDILCYLVEKNRLSYIRGVVAEYLKIYYTKNRIVDVEATFAIEPSEKQKAKLIEKLEKKTGKKVNLVIKINKAIIAGGIIKIGDEIIDGSVRRQLDTVARG.

Belongs to the ATPase delta chain family. F-type ATPases have 2 components, F(1) - the catalytic core - and F(0) - the membrane proton channel. F(1) has five subunits: alpha(3), beta(3), gamma(1), delta(1), epsilon(1). F(0) has three main subunits: a(1), b(2) and c(10-14). The alpha and beta chains form an alternating ring which encloses part of the gamma chain. F(1) is attached to F(0) by a central stalk formed by the gamma and epsilon chains, while a peripheral stalk is formed by the delta and b chains.

It is found in the cell inner membrane. Functionally, f(1)F(0) ATP synthase produces ATP from ADP in the presence of a proton or sodium gradient. F-type ATPases consist of two structural domains, F(1) containing the extramembraneous catalytic core and F(0) containing the membrane proton channel, linked together by a central stalk and a peripheral stalk. During catalysis, ATP synthesis in the catalytic domain of F(1) is coupled via a rotary mechanism of the central stalk subunits to proton translocation. In terms of biological role, this protein is part of the stalk that links CF(0) to CF(1). It either transmits conformational changes from CF(0) to CF(1) or is implicated in proton conduction. The polypeptide is ATP synthase subunit delta, sodium ion specific (Ilyobacter tartaricus).